An 82-amino-acid chain; its full sequence is Immediate early response 3-interacting protein 1 (82 aa).

2 helical membrane-spanning segments follow: residues 2-22 (AFTLYSLLQAALLCVNAIAVL) and 62-82 (VMRVPLIIVNSIAIVLLLLFG).

This sequence belongs to the YOS1 family.

It is found in the endoplasmic reticulum membrane. Functionally, regulator of endoplasmic reticulum secretion that acts as a key determinant of brain size. Required for secretion of extracellular matrix proteins. Required for correct brain development by depositing sufficient extracellular matrix proteins for tissue integrity and the proliferation of neural progenitors. Acts as a regulator of the unfolded protein response (UPR). The polypeptide is Immediate early response 3-interacting protein 1 (Bos taurus (Bovine)).